We begin with the raw amino-acid sequence, 55 residues long: Small integral membrane protein 11 (55 aa).

Residues 9 to 29 traverse the membrane as a helical segment; it reads VPLLLYILAAKTLILCLAFAG. A coiled-coil region spans residues 34-54; it reads QRRSLEGKLQAEKRKQSEKKA.

As to expression, expressed in brain, heart, kidney, thymus, liver, stomach, muscle, lung, testis, ovary, skin and eye.

It localises to the membrane. In Mus musculus (Mouse), this protein is Small integral membrane protein 11.